Reading from the N-terminus, the 372-residue chain is Putative glutamate--cysteine ligase 2 (372 aa).

It belongs to the glutamate--cysteine ligase type 2 family. YbdK subfamily.

The enzyme catalyses L-cysteine + L-glutamate + ATP = gamma-L-glutamyl-L-cysteine + ADP + phosphate + H(+). In terms of biological role, ATP-dependent carboxylate-amine ligase which exhibits weak glutamate--cysteine ligase activity. The chain is Putative glutamate--cysteine ligase 2 from Cupriavidus metallidurans (strain ATCC 43123 / DSM 2839 / NBRC 102507 / CH34) (Ralstonia metallidurans).